We begin with the raw amino-acid sequence, 611 residues long: Putative pentatricopeptide repeat-containing protein At1g56570 (611 aa).

PPR repeat units lie at residues 44–74 (HHILATNLIVSYFEKGLVEEARSLFDEMPDR), 75–109 (DVVAWTAMITGYASSNYNARAWECFHEMVKQGTSP), 110–144 (NEFTLSSVLKSCRNMKVLAYGALVHGVVVKLGMEG), 145–176 (SLYVDNAMMNMYATCSVTMEAACLIFRDIKVK), 177–211 (NDVTWTTLITGFTHLGDGIGGLKMYKQMLLENAEV), 212–246 (TPYCITIAVRASASIDSVTTGKQIHASVIKRGFQS), 247–281 (NLPVMNSILDLYCRCGYLSEAKHYFHEMEDKDLIT), 282–311 (WNTLISELERSDSSEALLMFQRFESQGFVP), 312–346 (NCYTFTSLVAACANIAALNCGQQLHGRIFRRGFNK), 347–377 (NVELANALIDMYAKCGNIPDSQRVFGEIVDR), 379–413 (NLVSWTSMMIGYGSHGYGAEAVELFDKMVSSGIRP), 414–444 (DRIVFMAVLSACRHAGLVEKGLKYFNVMESE), and 450–480 (DRDIYNCVVDLLGRAGKIGEAYELVERMPFK). Positions 485–561 (TWGAILGACK…EAGMSWILVE (77 aa)) are type E motif. The tract at residues 562 to 592 (NQVFSFAVSDKMCPNASSVYSVLGLLIEETR) is type E(+) motif.

Belongs to the PPR family. PCMP-E subfamily.

This Arabidopsis thaliana (Mouse-ear cress) protein is Putative pentatricopeptide repeat-containing protein At1g56570 (PCMP-E64).